Reading from the N-terminus, the 161-residue chain is Vasotocin-neurophysin VT (161 aa).

An N-terminal signal peptide occupies residues 1-22 (MSAMGWTLLAAALLAISAQSNG). C23 and C28 are joined by a disulfide. The residue at position 31 (G31) is a Glycine amide. 7 disulfide bridges follow: C43–C91, C46–C58, C52–C81, C59–C71, C99–C111, C105–C123, and C112–C117.

This sequence belongs to the vasopressin/oxytocin family.

The protein localises to the secreted. Functionally, vasotocin is an antidiuretic hormone. The protein is Vasotocin-neurophysin VT of Eptatretus stoutii (Pacific hagfish).